The chain runs to 436 residues: Testican-3 (436 aa).

Positions M1 to A22 are cleaved as a signal peptide. 8 cysteine pairs are disulfide-bonded: C90/C101, C95/C111, C139/C169, C142/C162, C151/C183, C317/C341, C352/C359, and C361/C380. The 53-residue stretch at G133 to C185 folds into the Kazal-like domain. Positions D314 to C380 constitute a Thyroglobulin type-1 domain. 2 O-linked (Xyl...) (glycosaminoglycan) serine glycosylation sites follow: S387 and S392. Positions G393–I436 are disordered. Residues T399–D430 are compositionally biased toward acidic residues.

In terms of processing, contains chondroitin sulfate and heparan sulfate O-linked oligosaccharides. In terms of tissue distribution, expressed in brain.

It is found in the secreted. The protein resides in the extracellular space. Its subcellular location is the extracellular matrix. Its function is as follows. May participate in diverse steps of neurogenesis. Inhibits the processing of pro-matrix metalloproteinase 2 (MMP-2) by MT1-MMP and MT3-MMP. May interfere with tumor invasion. This chain is Testican-3 (SPOCK3), found in Pongo abelii (Sumatran orangutan).